The following is a 138-amino-acid chain: Cysteine desulfuration protein SufE (138 aa).

Cys51 serves as the catalytic Cysteine persulfide intermediate.

The protein belongs to the SufE family. Homodimer. Interacts with SufS.

It is found in the cytoplasm. It functions in the pathway cofactor biosynthesis; iron-sulfur cluster biosynthesis. In terms of biological role, participates in cysteine desulfuration mediated by SufS. Cysteine desulfuration mobilizes sulfur from L-cysteine to yield L-alanine and constitutes an essential step in sulfur metabolism for biosynthesis of a variety of sulfur-containing biomolecules. Functions as a sulfur acceptor for SufS, by mediating the direct transfer of the sulfur atom from the S-sulfanylcysteine of SufS, an intermediate product of cysteine desulfuration process. In Klebsiella pneumoniae (strain 342), this protein is Cysteine desulfuration protein SufE.